The primary structure comprises 288 residues: NAD(P)H quinone oxidoreductase YCP4 (288 aa).

Residues 3–192 (IAIIQYSTYG…EIAEKQGEAF (190 aa)) form the Flavodoxin-like domain. FMN is bound by residues 9 to 13 (STYGH) and 110 to 164 (VFVS…SPYG). The segment at 202–288 (GSKKTNTTTT…KSSCSKCIIM (87 aa)) is disordered. Positions 205-254 (KTNTTTTSKSAATSDAAGTTSGTAAGTSAATGAATGTSAPKESTKEASSS) are enriched in low complexity. The span at 261–288 (NGTATRTQQSTKAPETAEKSSCSKCIIM) shows a compositional bias: polar residues.

This sequence belongs to the WrbA family. The cofactor is FMN.

It localises to the cell membrane. It catalyses the reaction a quinone + NADH + H(+) = a quinol + NAD(+). The catalysed reaction is a quinone + NADPH + H(+) = a quinol + NADP(+). In terms of biological role, flavodoxin-like protein (FLP) that plays a role in cell wall integrity, oxidative stress protection and virulence. FLPs act as NAD(P)H quinone oxidoreductases. Reduces ubiquinone (coenzyme Q), enabling it to serve as an antioxidant in the membrane. This Candida albicans (strain SC5314 / ATCC MYA-2876) (Yeast) protein is NAD(P)H quinone oxidoreductase YCP4.